A 362-amino-acid polypeptide reads, in one-letter code: Aspartate carbamoyltransferase catalytic subunit (362 aa).

The interval 1 to 22 is disordered; the sequence is MPKTAMTDSTSKTSTNTASSDM. Residues 7–20 are compositionally biased toward low complexity; that stretch reads TDSTSKTSTNTASS. Carbamoyl phosphate contacts are provided by Arg-100 and Thr-101. Residue Lys-128 coordinates L-aspartate. Positions 150, 180, and 183 each coordinate carbamoyl phosphate. L-aspartate is bound by residues Arg-214 and Arg-269. Carbamoyl phosphate is bound by residues Gly-310 and Pro-311.

Belongs to the aspartate/ornithine carbamoyltransferase superfamily. ATCase family. As to quaternary structure, heterododecamer (2C3:3R2) of six catalytic PyrB chains organized as two trimers (C3), and six regulatory PyrI chains organized as three dimers (R2).

It catalyses the reaction carbamoyl phosphate + L-aspartate = N-carbamoyl-L-aspartate + phosphate + H(+). Its pathway is pyrimidine metabolism; UMP biosynthesis via de novo pathway; (S)-dihydroorotate from bicarbonate: step 2/3. Its function is as follows. Catalyzes the condensation of carbamoyl phosphate and aspartate to form carbamoyl aspartate and inorganic phosphate, the committed step in the de novo pyrimidine nucleotide biosynthesis pathway. In Psychrobacter sp. (strain PRwf-1), this protein is Aspartate carbamoyltransferase catalytic subunit.